The primary structure comprises 489 residues: Coronin-1B (489 aa).

Ser-2 bears the Phosphoserine; by PKC mark. 6 WD repeats span residues 18–72 (QPVK…GRID), 73–122 (KAYP…SPLT), 123–166 (EPVV…GTAE), 167–210 (ELYR…RGTL), 211–256 (VAER…ENLE), and 257–296 (EPMA…RYFE). A disordered region spans residues 408-444 (RRNVLSDSRPAMAPGSSHLGAPASTTTAADATPSGSL). Positions 428–441 (APASTTTAADATPS) are enriched in low complexity. Positions 449–474 (EAGKLEEVMQELRALRALVKEQGDRI) form a coiled coil.

This sequence belongs to the WD repeat coronin family. In terms of assembly, forms homooligomers, but does not form complexes with the other coronins. Interacts with Arp2/3 complex components, including ACTR2, ARPC1B and ARPC2. Binds actin. Phosphorylation by PKC on Ser-2 regulates the interaction with the Arp2/3 complex and cell motility in fibroblasts. Phosphorylation does not seem to affect subcellular location.

The protein resides in the cytoplasm. It is found in the cytoskeleton. The protein localises to the stress fiber. In terms of biological role, regulates leading edge dynamics and cell motility in fibroblasts. May be involved in cytokinesis and signal transduction. This chain is Coronin-1B (CORO1B), found in Homo sapiens (Human).